Here is a 22-residue protein sequence, read N- to C-terminus: 2.4 kDa venom peptide (22 aa).

Contains 2 disulfide bonds. As to expression, expressed by the venom gland.

The protein resides in the secreted. Its function is as follows. Not lethal to mice by intraperitoneal or intracerebroventricular injections in doses up to 150 micrograms. The sequence is that of 2.4 kDa venom peptide from Heterometrus spinifer (Asia giant forest scorpion).